A 205-amino-acid polypeptide reads, in one-letter code: Isochorismatase domain-containing protein 2 (205 aa).

2 positions are modified to phosphoserine: Ser-7 and Ser-202.

The protein belongs to the isochorismatase family. As to quaternary structure, interacts with CDKN2A.

It localises to the cytoplasm. The protein localises to the nucleus. This chain is Isochorismatase domain-containing protein 2 (ISOC2), found in Homo sapiens (Human).